The sequence spans 316 residues: Beta-ketoacyl-[acyl-carrier-protein] synthase III (316 aa).

Active-site residues include Cys112 and His243. An ACP-binding region spans residues 244-248; the sequence is QANLR. Asn273 is a catalytic residue.

It belongs to the thiolase-like superfamily. FabH family. In terms of assembly, homodimer.

Its subcellular location is the cytoplasm. The catalysed reaction is malonyl-[ACP] + acetyl-CoA + H(+) = 3-oxobutanoyl-[ACP] + CO2 + CoA. The protein operates within lipid metabolism; fatty acid biosynthesis. In terms of biological role, catalyzes the condensation reaction of fatty acid synthesis by the addition to an acyl acceptor of two carbons from malonyl-ACP. Catalyzes the first condensation reaction which initiates fatty acid synthesis and may therefore play a role in governing the total rate of fatty acid production. Possesses both acetoacetyl-ACP synthase and acetyl transacylase activities. Its substrate specificity determines the biosynthesis of branched-chain and/or straight-chain of fatty acids. The sequence is that of Beta-ketoacyl-[acyl-carrier-protein] synthase III from Yersinia pseudotuberculosis serotype O:1b (strain IP 31758).